Consider the following 929-residue polypeptide: ATP-dependent RNA helicase DDX42 (929 aa).

Lys-5 is subject to N6-acetyllysine. Arg-12 is modified (omega-N-methylarginine). 2 disordered regions span residues 25–119 (KKEE…LEAF) and 182–203 (EYDS…LPPI). Over residues 35 to 52 (SHSAFGAASSSSGFGKSA) the composition is skewed to low complexity. Ser-58 bears the Phosphoserine mark. Residues 70-84 (DEENAYFEDEEEDSS) are compositionally biased toward acidic residues. 4 positions are modified to phosphoserine: Ser-96, Ser-104, Ser-109, and Ser-111. Residues 116–157 (LEAFMAEVEDQAARDMKRLEEKDKERKNVKGIRDDIEEEDDQ) are a coiled coil. At Ser-185 the chain carries Phosphoserine. A Q motif motif is present at residues 253–281 (SSFAHFGFDEQLMHQIRKSEYTQPTPIQC). In terms of domain architecture, Helicase ATP-binding spans 284-459 (VPVALSGRDM…RDILIDPIRV (176 aa)). 297–304 (AKTGSGKT) is a binding site for ATP. The DEAD box motif lies at 407–410 (DEAD). In terms of domain architecture, Helicase C-terminal spans 487–632 (WLTRRLVEFT…HVSKELLDLA (146 aa)). Disordered stretches follow at residues 662–682 (ERPG…VMSN) and 723–929 (GTSS…RWDS). Positions 723-737 (GTSSAGASGWTSAGS) are enriched in low complexity. Composition is skewed to polar residues over residues 738 to 777 (LNSV…SSAP) and 787 to 798 (GVNNTASGNNSR). The necessary for interaction with TP53BP2 stretch occupies residues 739–828 (NSVPTNSAQQ…RHSHGDGGNR (90 aa)). Over residues 821–911 (SHGDGGNRHG…KVDSKTDKTP (91 aa)) the composition is skewed to basic and acidic residues. Lys-894 participates in a covalent cross-link: Glycyl lysine isopeptide (Lys-Gly) (interchain with G-Cter in SUMO2).

This sequence belongs to the DEAD box helicase family. DDX42 subfamily. In terms of assembly, transient component of the SF3B subcomplex of the 17S U2 SnRNP complex. Interacts (via the C-terminus) with TP53BP2; the interaction is not inhibitied by TP53BP2 ubiquitination and is independent of p53/TP53.

Its subcellular location is the cytoplasm. It is found in the nucleus. The catalysed reaction is ATP + H2O = ADP + phosphate + H(+). Functionally, ATP-dependent RNA helicase that binds to partially double-stranded RNAs (dsRNAs) in order to unwind RNA secondary structures. Unwinding is promoted in the presence of single-strand binding proteins. Also mediates RNA duplex formation thereby displacing the single-strand RNA binding protein. ATP and ADP modulate its activity: ATP binding and hydrolysis by DDX42 triggers RNA strand separation, whereas the ADP-bound form of the protein triggers annealing of complementary RNA strands. Required for assembly of the 17S U2 SnRNP complex of the spliceosome, a large ribonucleoprotein complex that removes introns from transcribed pre-mRNAs: DDX42 associates transiently with the SF3B subcomplex of the 17S U2 SnRNP complex and is released after fulfilling its role in the assembly of 17S U2 SnRNP. Involved in the survival of cells by interacting with TP53BP2 and thereby counteracting the apoptosis-stimulating activity of TP53BP2. Relocalizes TP53BP2 to the cytoplasm. The sequence is that of ATP-dependent RNA helicase DDX42 (Ddx42) from Mus musculus (Mouse).